The following is a 746-amino-acid chain: tRNA (cytosine(34)-C(5))-methyltransferase (746 aa).

Residues 1 to 30 (MGRNQKQNFFAARKRQKRENGPKRTDRQAQ) form a disordered region. A compositionally biased stretch (basic and acidic residues) spans 18-30 (RENGPKRTDRQAQ). S-adenosyl-L-methionine contacts are provided by residues 184-190 (CAAPGSK), Asp-216, Asp-243, and Asp-270. Residue Cys-323 is the Nucleophile of the active site. Disordered stretches follow at residues 454 to 475 (QPAAEPQVDADGKPIEEKSVPW) and 701 to 746 (SAEA…VATS). The span at 463–472 (ADGKPIEEKS) shows a compositional bias: basic and acidic residues. The span at 704-714 (AEADSSGDGDA) shows a compositional bias: acidic residues. The segment covering 731–746 (AETTGTPMDTEVVATS) has biased composition (polar residues).

Belongs to the class I-like SAM-binding methyltransferase superfamily. RsmB/NOP family. TRM4 subfamily. In terms of tissue distribution, ubiquitously expressed during embryonic development. Some enrichment is observed in the proventriculus area of the foregut and in the hindgut.

It localises to the nucleus. It is found in the nucleolus. The enzyme catalyses cytidine(34) in tRNA precursor + S-adenosyl-L-methionine = 5-methylcytidine(34) in tRNA precursor + S-adenosyl-L-homocysteine + H(+). Functionally, RNA methyltransferase that methylates tRNAs. Methylates cytosine to 5-methylcytosine (m5C) at position 34 of intron-containing tRNA(Leu)(CAA) precursors. Required for short-term memory. This chain is tRNA (cytosine(34)-C(5))-methyltransferase, found in Drosophila melanogaster (Fruit fly).